Consider the following 91-residue polypeptide: Acylphosphatase (91 aa).

Residues 3–91 (TVTMKVTGLV…EKFTRFSVVY (89 aa)) enclose the Acylphosphatase-like domain. Active-site residues include arginine 18 and asparagine 36.

The protein belongs to the acylphosphatase family.

The enzyme catalyses an acyl phosphate + H2O = a carboxylate + phosphate + H(+). The protein is Acylphosphatase (acyP) of Lactobacillus gasseri (strain ATCC 33323 / DSM 20243 / BCRC 14619 / CIP 102991 / JCM 1131 / KCTC 3163 / NCIMB 11718 / NCTC 13722 / AM63).